Here is a 130-residue protein sequence, read N- to C-terminus: Small ribosomal subunit protein uS8 (130 aa).

This sequence belongs to the universal ribosomal protein uS8 family. In terms of assembly, part of the 30S ribosomal subunit.

Functionally, one of the primary rRNA binding proteins, it binds directly to 16S rRNA central domain where it helps coordinate assembly of the platform of the 30S subunit. The chain is Small ribosomal subunit protein uS8 from Methanothermobacter thermautotrophicus (strain ATCC 29096 / DSM 1053 / JCM 10044 / NBRC 100330 / Delta H) (Methanobacterium thermoautotrophicum).